Reading from the N-terminus, the 83-residue chain is FMRFamide-like neuropeptide 23 (83 aa).

Residues 1 to 24 form the signal peptide; the sequence is MLLPKISILLYILVVLQETAAVRG. Positions 25-36 are excised as a propeptide; sequence ALFRSGRAVPFE. Phenylalanine 47 carries the phenylalanine amide modification. Residues 50 to 83 constitute a propeptide that is removed on maturation; it reads AGMASGVGGGSEGGPDDVKNSYIRVNGEPEIVYQ.

Belongs to the FARP (FMRFamide related peptide) family. Each flp gene is expressed in a distinct set of neurons.

Its subcellular location is the secreted. Its function is as follows. FMRFamides and FMRFamide-like peptides are neuropeptides. The chain is FMRFamide-like neuropeptide 23 (flp-23) from Caenorhabditis elegans.